Here is a 152-residue protein sequence, read N- to C-terminus: Endoribonuclease YbeY (152 aa).

Residues histidine 113, histidine 117, and histidine 123 each coordinate Zn(2+).

Belongs to the endoribonuclease YbeY family. Zn(2+) is required as a cofactor.

Its subcellular location is the cytoplasm. In terms of biological role, single strand-specific metallo-endoribonuclease involved in late-stage 70S ribosome quality control and in maturation of the 3' terminus of the 16S rRNA. The chain is Endoribonuclease YbeY from Wolbachia pipientis subsp. Culex pipiens (strain wPip).